Reading from the N-terminus, the 383-residue chain is Lipid-A-disaccharide synthase (383 aa).

The protein belongs to the LpxB family.

It carries out the reaction a lipid X + a UDP-2-N,3-O-bis[(3R)-3-hydroxyacyl]-alpha-D-glucosamine = a lipid A disaccharide + UDP + H(+). It functions in the pathway bacterial outer membrane biogenesis; LPS lipid A biosynthesis. Functionally, condensation of UDP-2,3-diacylglucosamine and 2,3-diacylglucosamine-1-phosphate to form lipid A disaccharide, a precursor of lipid A, a phosphorylated glycolipid that anchors the lipopolysaccharide to the outer membrane of the cell. This chain is Lipid-A-disaccharide synthase, found in Myxococcus xanthus (strain DK1622).